We begin with the raw amino-acid sequence, 394 residues long: Myb-like protein R (394 aa).

2 helical membrane-spanning segments follow: residues 11–31 (IGAQIITTVITLFTGVFEFII) and 99–119 (FFIGAVFIHLNIIPFHHLIIF). Residues 325–377 (GNWSLDEQKALMVEVSTLGNKSEINWFFISKQLFLKGISRNARECQRKHESIQ) form the Myb-like domain.

The protein resides in the membrane. This chain is Myb-like protein R (mybR), found in Dictyostelium discoideum (Social amoeba).